Here is a 519-residue protein sequence, read N- to C-terminus: Cysteine--tRNA ligase (519 aa).

Residue C30 coordinates Zn(2+). The short motif at 32–42 (PTVYDRAHLGN) is the 'HIGH' region element. Residues C221, H253, and E257 each coordinate Zn(2+). The 'KMSKS' region signature appears at 286 to 290 (KMSKS). Residue K289 coordinates ATP.

The protein belongs to the class-I aminoacyl-tRNA synthetase family. Monomer. It depends on Zn(2+) as a cofactor.

Its subcellular location is the cytoplasm. It carries out the reaction tRNA(Cys) + L-cysteine + ATP = L-cysteinyl-tRNA(Cys) + AMP + diphosphate. The protein is Cysteine--tRNA ligase of Cereibacter sphaeroides (strain KD131 / KCTC 12085) (Rhodobacter sphaeroides).